The sequence spans 579 residues: Glypican-2 (579 aa).

Residues 1 to 21 (MSALRPLLLLLLHLCPGLGPG) form the signal peptide. O-linked (Xyl...) (heparan sulfate) serine glycans are attached at residues serine 55, serine 92, and serine 155. Disordered regions lie at residues 347-382 (GTPH…PTTA) and 483-552 (ALGQ…GRSR). The span at 361–379 (APREEASRSWRASAEEERP) shows a compositional bias: basic and acidic residues. 2 O-linked (Xyl...) (heparan sulfate) serine glycosylation sites follow: serine 498 and serine 500. Residues 517 to 527 (VVPPARPPRPP) show a composition bias toward pro residues. The GPI-anchor amidated serine moiety is linked to residue serine 556. Residues 557 to 579 (SVGLHTPLVLLLLPSALTLLVLR) constitute a propeptide, removed in mature form.

The protein belongs to the glypican family. Interacts (via heparan sulfate) with PTN; this interaction promotes neurite outgrowth through binding of PTN with chondroitin sulfate of proteoglycans, thereby releasing PTPRS of chondroitin sulfate proteoglycans (CSPGs) and leading to binding with heparan sulfate of GPC2. Interacts (heparan sulfate chain) with MDK; this interaction is inhibited by heparin followed by chondroitin sulfate E; this interaction induces GPC2 clustering through heparan sulfate chain; this interaction induces neuronal cell adhesion and neurite outgrowth.

Its subcellular location is the cell membrane. It localises to the secreted. The protein resides in the extracellular space. In terms of biological role, cell surface proteoglycan that bears heparan sulfate. May fulfill a function related to the motile behaviors of developing neurons. This is Glypican-2 (Gpc2) from Mus musculus (Mouse).